An 898-amino-acid chain; its full sequence is Protein translocase subunit SecA (898 aa).

ATP-binding positions include Q87, 105-109 (GEGKT), and D512. Positions 855 to 865 (MQYQNNEGTSS) are enriched in polar residues. The disordered stretch occupies residues 855–898 (MQYQNNEGTSSLHEKSEHKIGRNESCPCGSGKKYKHCHGSKAKY). Residues 866–876 (LHEKSEHKIGR) are compositionally biased toward basic and acidic residues. C880, C882, C891, and H892 together coordinate Zn(2+). Residues 886 to 898 (KKYKHCHGSKAKY) show a composition bias toward basic residues.

This sequence belongs to the SecA family. In terms of assembly, monomer and homodimer. Part of the essential Sec protein translocation apparatus which comprises SecA, SecYEG and auxiliary proteins SecDF-YajC and YidC. It depends on Zn(2+) as a cofactor.

It localises to the cell inner membrane. The protein resides in the cytoplasm. The enzyme catalyses ATP + H2O + cellular proteinSide 1 = ADP + phosphate + cellular proteinSide 2.. Functionally, part of the Sec protein translocase complex. Interacts with the SecYEG preprotein conducting channel. Has a central role in coupling the hydrolysis of ATP to the transfer of proteins into and across the cell membrane, serving both as a receptor for the preprotein-SecB complex and as an ATP-driven molecular motor driving the stepwise translocation of polypeptide chains across the membrane. The polypeptide is Protein translocase subunit SecA (Histophilus somni (strain 2336) (Haemophilus somnus)).